The sequence spans 471 residues: MGAFLLFVCVLAPFLLVCAVRGRRRQAGSSEAAACGLPLPPGSMGWPYVGETFQLYSSKNPNVFFNKKRNKYGPIFKTHILGCPCVMVSSPEAARFVLVTQAHLFKPTFPASKERMLGPQAIFFQQGDYHAHLRRIVSRAFSPESIRASVPAIEAIALRSLHSWDGQFVNTFQEMKTYALNVALLSIFGEEEMRYIEELKQCYLTLEKGYNSMPVNLPGTLFHKAMKARKRLGAIVAHIISARRERQRGNDLLGSFVDGREALTDAQIADNVIGVIFAARDTTASVLTWMVKFLGDHPAVLKAVTEEQLQIAKEKEASGEPLSWADTRRMKMTSRVIQETMRVASILSFTFREAVEDVEYQGYLIPKGWKVLPLFRNIHHNPDHFPCPEKFDPSRFEVAPKPNTFMPFGNGTHSCPGNELAKLEMLVLFHHLATKYRWSTSKSESGVQFGPFALPLNGLPMSFTRKNTEQE.

A helical membrane pass occupies residues 1 to 21 (MGAFLLFVCVLAPFLLVCAVR). Cysteine 415 contributes to the heme binding site.

Belongs to the cytochrome P450 family. Heme is required as a cofactor. In terms of tissue distribution, in seedlings and expanding leaves.

The protein localises to the membrane. It carries out the reaction 2-cis-(+)-abscisate + reduced [NADPH--hemoprotein reductase] + O2 = (+)-8'-hydroxyabscisate + oxidized [NADPH--hemoprotein reductase] + H2O + H(+). It functions in the pathway plant hormone degradation; abscisic acid degradation. In terms of biological role, involved in the oxidative degradation of abscisic acid. This chain is Abscisic acid 8'-hydroxylase 1 (CYP707A5), found in Oryza sativa subsp. indica (Rice).